The primary structure comprises 152 residues: MAKLTILIALVAALVLVVHTSAFRSSEQSCKRQLQQVNLRHCENHIDQRIQQQQEEEEDRARKLRGIKHVILRHKSSQESEESEELDQCCEQLNELNSQRCQCRALQQIYESQSEQCEGRQQEQQLEGELEKLPRICGFGPLRRCNINPDEE.

The signal sequence occupies residues 1–22; sequence MAKLTILIALVAALVLVVHTSA. 4 cysteine pairs are disulfide-bonded: C30–C101, C42–C89, C90–C137, and C103–C145.

This sequence belongs to the 2S seed storage albumins family. Heterodimer of a small chain and a large chain; disulfide-linked. In terms of tissue distribution, expressed in developing cotyledons and in the embryonic axis of germinating seeds.

It localises to the endoplasmic reticulum. This chain is Conglutin delta 1, found in Lupinus angustifolius (Narrow-leaved blue lupine).